The sequence spans 570 residues: Putative diflavin flavoprotein A 6 (570 aa).

The tract at residues 38 to 231 is zinc metallo-hydrolase; sequence AKGTTANSYL…FPTRLYATGH (194 aa). In terms of domain architecture, Flavodoxin-like spans 260–402; it reads VALIYASAYG…AGTDFAQALK (143 aa). The segment at 421–570 is flavodoxin-reductase-like; that stretch reads VGRIVGSLCV…VHHRKSGNHY (150 aa).

The protein in the N-terminal section; belongs to the zinc metallo-hydrolase group 3 family. It in the C-terminal section; belongs to the flavodoxin reductase family. It depends on Fe cation as a cofactor.

Mediates electron transfer from NADH to oxygen, reducing it to water. This modular protein has 3 redox cofactors, in other organisms the same activity requires 2 or 3 proteins. This Nostoc sp. (strain PCC 7120 / SAG 25.82 / UTEX 2576) protein is Putative diflavin flavoprotein A 6 (dfa6).